A 359-amino-acid chain; its full sequence is MITVNVDLGDRAYPIHIGAGLIGRTELFAPHIKGSSVTIVTNTTVDPLYGDALRAALAPLGKRVSTVVLPDGEAYKNWETLNLIFDGLLTDHADRKTTLVALGGGVVGDMTGFAAACYMRGVPFIQVPTTLLSQVDSSVGGKTGINHPLGKNMIGAFYQPQAVIADIGALTTLPDRELAAGVAEVIKTGAIADAGFFDWIEANVEALNRREPAALAHAVKRSCEIKASVVAADEREGGLRAILNFGHTFGHAIEAGLGYGEWLHGEAVGCGMVMAGDLSVRLGLLDEASRQRLDAVIAAAHLPTRGPALGDARYMDLMRVDKKAEAGAIKFVLLKRFGDTLITQAPDEAVFATLAQTTR.

NAD(+) contacts are provided by residues 71-76, 105-109, 129-130, K142, and K151; these read DGEAYK, GVVGD, and TT. E184, H247, and H264 together coordinate Zn(2+).

The protein belongs to the sugar phosphate cyclases superfamily. Dehydroquinate synthase family. Co(2+) is required as a cofactor. It depends on Zn(2+) as a cofactor. Requires NAD(+) as cofactor.

It is found in the cytoplasm. The catalysed reaction is 7-phospho-2-dehydro-3-deoxy-D-arabino-heptonate = 3-dehydroquinate + phosphate. Its pathway is metabolic intermediate biosynthesis; chorismate biosynthesis; chorismate from D-erythrose 4-phosphate and phosphoenolpyruvate: step 2/7. Its function is as follows. Catalyzes the conversion of 3-deoxy-D-arabino-heptulosonate 7-phosphate (DAHP) to dehydroquinate (DHQ). This is 3-dehydroquinate synthase from Burkholderia orbicola (strain MC0-3).